The chain runs to 158 residues: Transcriptional repressor NrdR (158 aa).

Residues 3–34 (CPYCGYPDSKVIDSRPTDDNTSIRRRRECLKC) fold into a zinc finger. In terms of domain architecture, ATP-cone spans 49–139 (ILVIKKDNRR…VYRQFKDINT (91 aa)).

Belongs to the NrdR family. Zn(2+) is required as a cofactor.

In terms of biological role, negatively regulates transcription of bacterial ribonucleotide reductase nrd genes and operons by binding to NrdR-boxes. This Thermoanaerobacter pseudethanolicus (strain ATCC 33223 / 39E) (Clostridium thermohydrosulfuricum) protein is Transcriptional repressor NrdR.